A 677-amino-acid chain; its full sequence is Polyunsaturated fatty acid lipoxygenase ALOX15B (677 aa).

A PLAT domain is found at 2–125 (AKFRVRVSTG…ELVLREGAAK (124 aa)). Residues Gly15, Gly17, Asp39, His40, Gly42, Glu44, Asp86, and Ala87 each contribute to the Ca(2+) site. The 552-residue stretch at 126 to 677 (VSWQDHHRTL…PPLIENSVSI (552 aa)) folds into the Lipoxygenase domain. Fe cation-binding residues include His374, His379, His554, and Ile677.

This sequence belongs to the lipoxygenase family. It depends on Fe cation as a cofactor.

It is found in the cytoplasm. The protein resides in the cytosol. Its subcellular location is the cell membrane. It localises to the cytoskeleton. The protein localises to the membrane. It is found in the cell junction. The protein resides in the adherens junction. Its subcellular location is the focal adhesion. It localises to the nucleus. The catalysed reaction is (5Z,8Z,11Z,14Z)-eicosatetraenoate + O2 = (15S)-hydroperoxy-(5Z,8Z,11Z,13E)-eicosatetraenoate. It carries out the reaction (9Z,12Z)-octadecadienoate + O2 = 13-hydroperoxy-(9Z,11E)-octadecadienoate. It catalyses the reaction (5S)-hydroxy-(6E,8Z,11Z,14Z)-eicosatetraenoate + O2 = (5S)-hydroxy-(15S)-hydroperoxy-(6E,8Z,11Z,13E)-eicosatetraenoate. The enzyme catalyses (5Z,8Z,11Z,14Z)-eicosatetraenoate + O2 = 5-hydroperoxy-(6E,8Z,11Z,14Z)-eicosatetraenoate. The catalysed reaction is (5S,6R)-dihydroxy-(7E,9E,11Z,14Z)-eicosatetraenoate + O2 = (5S,6R)-dihydroxy-(15S)-hydroperoxy-(7E,9E,11Z,13E)-eicosatetraenoate. It carries out the reaction (5S)-hydroperoxy-(6E,8Z,11Z,14Z)-eicosatetraenoate + O2 = (5S,15S)-dihydroperoxy-(6E,8Z,11Z,13E)-eicosatetraenoate. It catalyses the reaction 2-(5Z,8Z,11Z,14Z-eicosatetraenoyl)-glycerol + O2 = 2-[15(S)-hydroperoxy-(5Z,8Z,11Z,13E)-eicosatetraenoyl]-glycerol. The enzyme catalyses (8S)-hydroperoxy-(5Z,9E,11Z,14Z)-eicosatetraenoate + O2 = (8S,15S)-dihydroperoxy-(5Z,9E,11Z,13E)-eicosatetraenoate. The catalysed reaction is N-(5Z,8Z,11Z,14Z)-eicosatetraenoyl-L-alanine + O2 = N-(15S)-hydroperoxy-(5Z,8Z,11Z,13E)-eicosatetraenoyl-alanine. It carries out the reaction N-(5Z,8Z,11Z,14Z)-eicosatetraenoyl-gamma-aminobutanoate + O2 = N-(15S)-hydroperoxy-(5Z,8Z,11Z,13E)-eicosatetraenoyl-gamma-aminobutanoate. It catalyses the reaction N-(5Z,8Z,11Z,14Z)-eicosatetraenoyl-glycine + O2 = N-(15S)-hydroperoxy-(5Z,8Z,11Z,13E)-eicosatetraenoyl-glycine. The enzyme catalyses N-(5Z,8Z,11Z,14Z)-eicosatetraenoyl-taurine + O2 = N-(15S)-hydroperoxy-(5Z,8Z,11Z,13E)-eicosatetraenoyl-taurine. The catalysed reaction is 2-(5Z,8Z,11Z,14Z-eicosatetraenoyl)-glycerol + O2 = 2-[12-hydroperoxy-(5Z,8Z,10E,14Z)-eicosatetraenoyl]-glycerol. It carries out the reaction 1-octadecanoyl-2-(5Z,8Z,11Z,14Z-eicosatetraenoyl)-sn-glycero-3-phosphocholine + O2 = 1-octadecanoyl-2-(15-hydroperoxy-5Z,8Z,11Z,13E-eicosatetraenoyl)-sn-glycero-3-phosphocholine. It catalyses the reaction a 1-acyl-2-(5Z,8Z,11Z,14Z-eicosatetraenoyl)-sn-glycero-3-phospho-(1D-myo-inositol) + O2 = a 1-acyl-2-(15-hydroperoxy-5Z,8Z,11Z,13E-eicosatetraenoyl)-sn-glycero-3-phospho-(1D-myo-inositol). The enzyme catalyses a 1-acyl-2-(8Z,11Z,14Z-eicosatrienoyl)-sn-glycero-3-phospho-(1D-myo-inositol) + O2 = a 1-acyl-2-(15-hydroperoxy-8Z,11Z,13E-eicosatrienoyl)-sn-glycero-3-phospho-(1D-myo-inositol). The catalysed reaction is 1-octadecanoyl-2-(5Z,8Z,11Z,14Z)-eicosatetraenoyl-sn-glycero-3-phosphoethanolamine + O2 = 1-octadecanoyl-2-(15-hydroperoxy-5Z,8Z,11Z,13E-eicosatetraenoyl)-sn-glycero-3-phosphoethanolamine. It carries out the reaction 1-octadecanoyl-2-(5Z,8Z,11Z,14Z-eicosatetraenoyl)-sn-glycero-3-phospho-(1D-myo-inositol) + O2 = 1-octadecanoyl-2-(15-hydroperoxy-5Z,8Z,11Z,13E-eicosatetraenoyl)-sn-glycero-3-phospho-(1D-myo-inositol). It catalyses the reaction (8Z,11Z,14Z)-eicosatrienoate + O2 = 15-hydroperoxy-(8Z,11Z,13E)-eicosatrienoate. The enzyme catalyses (7S)-hydroperoxy-(4Z,8E,10Z,13Z,16Z,19Z)-docosahexaenoate + O2 = (7S,17S)-dihydroperoxy-(4Z,8E,10Z,13Z,15E,19Z)-docosahexaenoate. It participates in lipid metabolism; hydroperoxy eicosatetraenoic acid biosynthesis. Non-heme iron-containing dioxygenase that catalyzes the stereo-specific peroxidation of free and esterified polyunsaturated fatty acids (PUFAs) generating a spectrum of bioactive lipid mediators. Inserts a peroxyl group at C15 of arachidonate ((5Z,8Z,11Z,14Z)-eicosatetraenoate) producing (15S)-hydroperoxyeicosatetraenoate/(15S)-HPETE. Also peroxidizes linoleate ((9Z,12Z)-octadecadienoate) to 13-hydroperoxyoctadecadienoate/13-HPODE. Oxygenates arachidonyl derivatives such as 2-arachidonoylglycerol (2-AG) leading to the production and extracellular release of 15-hydroxyeicosatetraenoyl glycerol (15-HETE-G) that acts as a peroxisome proliferator-activated receptor alpha agonist. Has the ability to efficiently class-switch ALOX5 pro-inflammatory mediators into anti-inflammatory intermediates. Participates in the sequential oxidations of DHA ((4Z,7Z,10Z,13Z,16Z,19Z)-docosahexaenoate) to generate specialized pro-resolving mediators (SPMs) resolvin D5 ((7S,17S)-diHPDHA), which can actively down-regulate the immune response and have anti-aggregation properties with platelets. In addition to free PUFAs hydrolyzed from phospholipids, it directly oxidizes PUFAs esterified to membrane-bound phospholipids. Has no detectable 8S-lipoxygenase activity on arachidonate but reacts with (8S)-HPETE to produce (8S,15S)-diHPETE. May regulate progression through the cell cycle and cell proliferation. May also regulate cytokine secretion by macrophages and therefore play a role in the immune response. May also regulate macrophage differentiation into proatherogenic foam cells. This Rattus norvegicus (Rat) protein is Polyunsaturated fatty acid lipoxygenase ALOX15B.